Consider the following 615-residue polypeptide: Vitamin B12 transporter BtuB (615 aa).

A signal peptide spans 1-20 (MIKKVSLMTALSVTAFSGWA). A TonB box motif is present at residues 25-32 (DSLVVTAN). In terms of domain architecture, TBDR plug spans 37–151 (PANTVLAPTS…IGGVVNIITT (115 aa)). Residues Ser84, Asn91, and 109 to 110 (VT) contribute to the cyanocob(III)alamin site. The TBDR beta-barrel domain maps to 154-615 (KDGTTLNAGV…EYTLSGSYTF (462 aa)). 3 beta stranded membrane-spanning segments follow: residues 157-164 (TTLNAGVG), 168-177 (YQNYGGSTQQ), and 183-194 (TRVTLAGDYTYT). The Ca(2+) site is built by Asp198, Gln210, Asp212, and Asp214. Transmembrane regions (beta stranded) follow at residues 216–226 (YMNKTIYGALE) and 231–247 (DQWS…NRTA). Residues Tyr248 and Asp249 each contribute to the Ca(2+) site. Ala250 lines the cyanocob(III)alamin pocket. Residue Asp262 coordinates Ca(2+). Transmembrane regions (beta stranded) follow at residues 264–278 (RQLY…LRFN), 280–297 (GIFH…KDYN), 310–326 (TLDE…NSVD), 329–338 (HGNVGAGVDW), 354–370 (TNLR…QKFG), 372–382 (FTLEGAARSDD), 386–401 (FGRH…WEFI), 404–418 (YRFI…KAPN), 435–444 (ESKQWEGAFE), 450–459 (VSWRVSAYRN), 474–491 (YYNV…TASF), 495–510 (PLTH…ARNA), 518–530 (RRAK…QLDT), 536–551 (DWSL…YDTD), 559–573 (KVKM…LAVS), 586–597 (IANLFDKDYETV), and 603–615 (AGRE…SYTF). A cyanocob(III)alamin-binding site is contributed by Thr310. Arg518 is a cyanocob(III)alamin binding site. A TonB C-terminal box motif is present at residues 598-615 (YGYETAGREYTLSGSYTF).

It belongs to the TonB-dependent receptor family. BtuB (TC 1.B.14.3.1) subfamily.

It localises to the cell outer membrane. Involved in the active translocation of vitamin B12 (cyanocobalamin) across the outer membrane to the periplasmic space. It derives its energy for transport by interacting with the trans-periplasmic membrane protein TonB. This chain is Vitamin B12 transporter BtuB, found in Enterobacter sp. (strain 638).